The sequence spans 429 residues: Enolase (429 aa).

Position 162 (Q162) interacts with (2R)-2-phosphoglycerate. E204 serves as the catalytic Proton donor. Residues D241, E283, and D310 each contribute to the Mg(2+) site. (2R)-2-phosphoglycerate contacts are provided by K335, R364, S365, and K386. The active-site Proton acceptor is the K335.

The protein belongs to the enolase family. Requires Mg(2+) as cofactor.

It localises to the cytoplasm. The protein localises to the secreted. Its subcellular location is the cell surface. It catalyses the reaction (2R)-2-phosphoglycerate = phosphoenolpyruvate + H2O. It functions in the pathway carbohydrate degradation; glycolysis; pyruvate from D-glyceraldehyde 3-phosphate: step 4/5. In terms of biological role, catalyzes the reversible conversion of 2-phosphoglycerate (2-PG) into phosphoenolpyruvate (PEP). It is essential for the degradation of carbohydrates via glycolysis. The chain is Enolase from Mycolicibacterium gilvum (strain PYR-GCK) (Mycobacterium gilvum (strain PYR-GCK)).